A 369-amino-acid chain; its full sequence is 3-methylarginine biosynthesis aminotransferase ArgM (369 aa).

The residue at position 216 (K216) is an N6-(pyridoxal phosphate)lysine.

This sequence belongs to the class-I pyridoxal-phosphate-dependent aminotransferase family. It depends on pyridoxal 5'-phosphate as a cofactor.

The enzyme catalyses L-arginine + 2-oxoglutarate = 5-guanidino-2-oxopentanoate + L-glutamate. It catalyses the reaction (3R)-5-guanidino-3-methyl-2-oxopentanoate + L-aspartate = (3R)-3-methyl-L-arginine + oxaloacetate. It functions in the pathway antibiotic biosynthesis. Functionally, aminotransferase involved in the formation of the rare amino acid 3-methylarginine (MeArg), which is incorporated into the peptidyl nucleoside antibiotic arginomycin. Catalyzes two rounds of transamination: the transfer of the amino group from L-arginine to 2-oxoglutarate to give glutamate and 5-guanidino-2-oxopentanoic acid, which will be methylated by ArgN. Then, ArgM specifically catalyzes transamination from the donor L-aspartate to the 5-guanidino-3-methyl-2-oxopentanoic acid produced by ArgN, generating the final product, 3-methylarginine. Cannot use arginine analogs, such as D-arginine, L-homoarginine and N-methylarginine for the first transamination. This is 3-methylarginine biosynthesis aminotransferase ArgM from Streptomyces arginensis.